The following is a 382-amino-acid chain: Transcription termination/antitermination protein NusA (382 aa).

Residues Glu135–Thr199 form the S1 motif domain. In terms of domain architecture, KH spans Glu301 to Asp367. The disordered stretch occupies residues Leu348–Glu382.

This sequence belongs to the NusA family. In terms of assembly, monomer. Binds directly to the core enzyme of the DNA-dependent RNA polymerase and to nascent RNA.

It is found in the cytoplasm. Its function is as follows. Participates in both transcription termination and antitermination. The chain is Transcription termination/antitermination protein NusA from Halalkalibacterium halodurans (strain ATCC BAA-125 / DSM 18197 / FERM 7344 / JCM 9153 / C-125) (Bacillus halodurans).